A 212-amino-acid chain; its full sequence is MKAKREALQSLFTAMRDGKVDGDIIDLLLLINSIKGIYTTSSCSGRIGIIEEPALGAKPLSRWLIKVHRPIEFEEAKEALKNAKEGIIFLKSQPPIFHVVAEDLEKARKLHELGLASGFKYTTFKVISKRYLVEINATEYLTAPLGRDGRVLVDDGYLRFAVEIGNEMLRRSKGRLPRLEENFRRLREELGTDELFYELVEEYKIRENWELP.

Belongs to the TYW3 family.

The catalysed reaction is 4-demethyl-7-[(3S)-3-amino-3-carboxypropyl]wyosine(37) in tRNA(Phe) + S-adenosyl-L-methionine = 7-[(3S)-3-amino-3-carboxypropyl]wyosine(37) in tRNA(Phe) + S-adenosyl-L-homocysteine + H(+). Functionally, S-adenosyl-L-methionine-dependent methyltransferase that acts as a component of the wyosine derivatives biosynthesis pathway. Probably methylates N-4 position of wybutosine-86 to produce wybutosine-72. The sequence is that of tRNA(Phe) 7-((3-amino-3-carboxypropyl)-4-demethylwyosine(37)-N(4))-methyltransferase 2 from Thermococcus kodakarensis (strain ATCC BAA-918 / JCM 12380 / KOD1) (Pyrococcus kodakaraensis (strain KOD1)).